Here is a 600-residue protein sequence, read N- to C-terminus: ATP-dependent lipid A-core flippase (600 aa).

A run of 6 helical transmembrane segments spans residues 28 to 48, 80 to 100, 159 to 179, 182 to 202, 267 to 287, and 295 to 315; these read TLSILGLIVYGLVDAAFIAFI, VMLMAPLVVIGMFTLRGVANF, ALISIVRDSITVIGMLALMFF, WKLSLCILVIGPLMGVVISIV, VSQPVIMIIGSFALAFVLYAA, and ELTAGTFAAILGAMLAMLQPI. Residues 29–327 enclose the ABC transmembrane type-1 domain; sequence LSILGLIVYG…LTRVNAEFQR (299 aa). Residues 359-596 enclose the ABC transporter domain; sequence LRFDNVSFSY…KGAYAGLYQM (238 aa). Residue 393 to 400 coordinates ATP; the sequence is GRSGSGKS.

Belongs to the ABC transporter superfamily. Lipid exporter (TC 3.A.1.106) family. In terms of assembly, homodimer.

It is found in the cell inner membrane. It catalyses the reaction ATP + H2O + lipid A-core oligosaccharideSide 1 = ADP + phosphate + lipid A-core oligosaccharideSide 2.. Functionally, involved in lipopolysaccharide (LPS) biosynthesis. Translocates lipid A-core from the inner to the outer leaflet of the inner membrane. Transmembrane domains (TMD) form a pore in the inner membrane and the ATP-binding domain (NBD) is responsible for energy generation. This is ATP-dependent lipid A-core flippase from Shewanella denitrificans (strain OS217 / ATCC BAA-1090 / DSM 15013).